A 70-amino-acid chain; its full sequence is Cold shock-like protein CspG (70 aa).

In terms of domain architecture, CSD spans 7–67; that stretch reads GLVKWFNEEK…GQKGLQAANV (61 aa).

Its subcellular location is the cytoplasm. This Shewanella violacea (strain JCM 10179 / CIP 106290 / LMG 19151 / DSS12) protein is Cold shock-like protein CspG (cspG).